Reading from the N-terminus, the 142-residue chain is Negative cofactor 2 complex subunit alpha (142 aa).

Over residues 1–11 the composition is skewed to polar residues; that stretch reads MADQVPVTTQL. The tract at residues 1–43 is disordered; sequence MADQVPVTTQLPPIKPEHEVPLDAGGSPVGNMGTNSNNNNELG. Ser-27 carries the phosphoserine modification. The 109-residue stretch at 29 to 137 folds into the Histone-fold domain; the sequence is VGNMGTNSNN…LCVEEGQTQP (109 aa). Residue Ser-141 is modified to Phosphoserine.

Belongs to the NC2 alpha/DRAP1 family. In terms of assembly, component of the NC2 (negative cofactor 2) complex composed of BUR6 and NCB2. The NC2 complex associates with SPT15/TBP. Interacts with SPT15/TBP.

Its subcellular location is the nucleus. In terms of biological role, component of the NC2 complex which represses RNA polymerase II transcription through binding to SPT15/TBP and thereby inhibiting the assembly of the preinitiation complex. The NC2 complex may also mediate transcriptional activation from TATA-driven promoters through association with SPT15/TBP. The chain is Negative cofactor 2 complex subunit alpha (BUR6) from Saccharomyces cerevisiae (strain ATCC 204508 / S288c) (Baker's yeast).